Reading from the N-terminus, the 214-residue chain is Thiamine-phosphate synthase (214 aa).

4-amino-2-methyl-5-(diphosphooxymethyl)pyrimidine contacts are provided by residues 40–44 (QLREK) and Asn72. The Mg(2+) site is built by Asp73 and Asp92. Position 110 (Ser110) interacts with 4-amino-2-methyl-5-(diphosphooxymethyl)pyrimidine. 137-139 (SPT) is a binding site for 2-[(2R,5Z)-2-carboxy-4-methylthiazol-5(2H)-ylidene]ethyl phosphate. Residue Lys140 coordinates 4-amino-2-methyl-5-(diphosphooxymethyl)pyrimidine. 2-[(2R,5Z)-2-carboxy-4-methylthiazol-5(2H)-ylidene]ethyl phosphate-binding positions include Gly167 and 185-186 (IS).

It belongs to the thiamine-phosphate synthase family. Requires Mg(2+) as cofactor.

It carries out the reaction 2-[(2R,5Z)-2-carboxy-4-methylthiazol-5(2H)-ylidene]ethyl phosphate + 4-amino-2-methyl-5-(diphosphooxymethyl)pyrimidine + 2 H(+) = thiamine phosphate + CO2 + diphosphate. The enzyme catalyses 2-(2-carboxy-4-methylthiazol-5-yl)ethyl phosphate + 4-amino-2-methyl-5-(diphosphooxymethyl)pyrimidine + 2 H(+) = thiamine phosphate + CO2 + diphosphate. The catalysed reaction is 4-methyl-5-(2-phosphooxyethyl)-thiazole + 4-amino-2-methyl-5-(diphosphooxymethyl)pyrimidine + H(+) = thiamine phosphate + diphosphate. It participates in cofactor biosynthesis; thiamine diphosphate biosynthesis; thiamine phosphate from 4-amino-2-methyl-5-diphosphomethylpyrimidine and 4-methyl-5-(2-phosphoethyl)-thiazole: step 1/1. Condenses 4-methyl-5-(beta-hydroxyethyl)thiazole monophosphate (THZ-P) and 2-methyl-4-amino-5-hydroxymethyl pyrimidine pyrophosphate (HMP-PP) to form thiamine monophosphate (TMP). The polypeptide is Thiamine-phosphate synthase (Wolinella succinogenes (strain ATCC 29543 / DSM 1740 / CCUG 13145 / JCM 31913 / LMG 7466 / NCTC 11488 / FDC 602W) (Vibrio succinogenes)).